The primary structure comprises 219 residues: Orotate phosphoribosyltransferase (219 aa).

Lys-26 contributes to the 5-phospho-alpha-D-ribose 1-diphosphate binding site. Position 34 to 35 (34 to 35 (FF)) interacts with orotate. 5-phospho-alpha-D-ribose 1-diphosphate is bound by residues 72–73 (YK), Arg-98, Lys-99, Lys-102, His-104, and 124–132 (DDVITAGTA). Orotate-binding residues include Thr-128 and Arg-156.

Belongs to the purine/pyrimidine phosphoribosyltransferase family. PyrE subfamily. Homodimer. Requires Mg(2+) as cofactor.

It carries out the reaction orotidine 5'-phosphate + diphosphate = orotate + 5-phospho-alpha-D-ribose 1-diphosphate. It participates in pyrimidine metabolism; UMP biosynthesis via de novo pathway; UMP from orotate: step 1/2. In terms of biological role, catalyzes the transfer of a ribosyl phosphate group from 5-phosphoribose 1-diphosphate to orotate, leading to the formation of orotidine monophosphate (OMP). In Xanthomonas campestris pv. campestris (strain 8004), this protein is Orotate phosphoribosyltransferase.